The chain runs to 507 residues: MQIKAEEISQIIKDQIGDYETSVDLNETGTVISVGDGIARIYGVQNCMAMELLEFPSGIMGLALNLEEDNVGCAVLGSVQGIKEGDIVKRTGKIAEVPVGPAMSGRVVDGLGKPIDGQGPINSDLTSKIEVVAPGVIARKGVHEPCYTGAKAVDAMTPVGRGQRELVIGDRQIGKTALCVDAIIAQKNTDVHCIYVAVGQKKSTVALVVEALRKHGAMEYTTVVAACASDPAPMQYIAPFAGCSMGEYYRDNGQHALIIYDDLSKQAVAYRELSLLLRRPPGREAYPGDIFFNHSRLLERASKVNDELGAGSLTALPIIETQAGDVSAFIPTNVISITDGQVYLEPNLFFSGVRPAVNIGLSVSRVGGSAQCKAMKQVAGTLRLDLAQYRELAAFAAFGSDLDVSTQAKLTRGERLVEILKQPQYQPLPMEKQVTILYAGSTGHLDSLPIGSLAAYEADLYDYLEANEPSVFTDLVAEQAFTDGIKEKLNKALTSFGETFKAIKGLK.

Gly169–Thr176 contributes to the ATP binding site.

The protein belongs to the ATPase alpha/beta chains family. F-type ATPases have 2 components, CF(1) - the catalytic core - and CF(0) - the membrane proton channel. CF(1) has five subunits: alpha(3), beta(3), gamma(1), delta(1), epsilon(1). CF(0) has three main subunits: a(1), b(2) and c(9-12). The alpha and beta chains form an alternating ring which encloses part of the gamma chain. CF(1) is attached to CF(0) by a central stalk formed by the gamma and epsilon chains, while a peripheral stalk is formed by the delta and b chains.

The protein resides in the cell inner membrane. It carries out the reaction ATP + H2O + 4 H(+)(in) = ADP + phosphate + 5 H(+)(out). Produces ATP from ADP in the presence of a proton gradient across the membrane. The alpha chain is a regulatory subunit. The polypeptide is ATP synthase subunit alpha (Desulfotalea psychrophila (strain LSv54 / DSM 12343)).